Consider the following 224-residue polypeptide: 2-C-methyl-D-erythritol 4-phosphate cytidylyltransferase (224 aa).

Belongs to the IspD/TarI cytidylyltransferase family. IspD subfamily.

The enzyme catalyses 2-C-methyl-D-erythritol 4-phosphate + CTP + H(+) = 4-CDP-2-C-methyl-D-erythritol + diphosphate. It participates in isoprenoid biosynthesis; isopentenyl diphosphate biosynthesis via DXP pathway; isopentenyl diphosphate from 1-deoxy-D-xylulose 5-phosphate: step 2/6. Functionally, catalyzes the formation of 4-diphosphocytidyl-2-C-methyl-D-erythritol from CTP and 2-C-methyl-D-erythritol 4-phosphate (MEP). The protein is 2-C-methyl-D-erythritol 4-phosphate cytidylyltransferase of Saccharopolyspora erythraea (strain ATCC 11635 / DSM 40517 / JCM 4748 / NBRC 13426 / NCIMB 8594 / NRRL 2338).